Here is a 291-residue protein sequence, read N- to C-terminus: N-acetylmannosamine kinase (291 aa).

Residues 5–12 (AIDIGGTK) and 132–139 (GVGGGVVC) each bind ATP. Positions 156, 166, 168, and 173 each coordinate Zn(2+).

The protein belongs to the ROK (NagC/XylR) family. NanK subfamily. In terms of assembly, homodimer.

It catalyses the reaction an N-acyl-D-mannosamine + ATP = an N-acyl-D-mannosamine 6-phosphate + ADP + H(+). It participates in amino-sugar metabolism; N-acetylneuraminate degradation; D-fructose 6-phosphate from N-acetylneuraminate: step 2/5. In terms of biological role, catalyzes the phosphorylation of N-acetylmannosamine (ManNAc) to ManNAc-6-P. The chain is N-acetylmannosamine kinase from Salmonella dublin (strain CT_02021853).